Consider the following 39-residue polypeptide: RapF inhibitor (39 aa).

Residues 1-34 (MKLKSKLLLSCLALSTVFVATTIANAPTHQIEVA) constitute a propeptide that is removed on maturation.

Belongs to the Phr family. As to quaternary structure, interacts with RapF and inhibits its interaction with ComA. Contains a predicted signal peptide cleavage site in the N-terminal region, however the propeptide is probably subject to only one processing event, at the N-terminal end of the mature peptide.

Its subcellular location is the secreted. The protein localises to the cytoplasm. Signaling molecule involved in the regulation of genetic competence development. Secreted during production, but the mature peptide acts intracellularly, indicating that it needs to be imported into the cell to function. Stimulates expression of the genes controlled by ComA, a transcriptional factor that regulates the development of genetic competence. Acts by inhibiting RapF, which regulates the activity of ComA. The protein is RapF inhibitor (phrF) of Bacillus subtilis (strain 168).